Here is a 2138-residue protein sequence, read N- to C-terminus: DNA polymerase epsilon catalytic subunit B (2138 aa).

The Nuclear localization signal 1 signature appears at 1224 to 1231 (EKRKWKMT). Zn(2+) is bound by residues cysteine 2015, cysteine 2018, cysteine 2040, and cysteine 2045. A CysA-type zinc finger spans residues 2015 to 2045 (CSNCGAYRDLDFCRDSALLTEKEWSCADPQC). 4 residues coordinate [4Fe-4S] cluster: cysteine 2076, cysteine 2079, cysteine 2091, and cysteine 2093. The short motif at 2076 to 2093 (CNRCNQVKAAHLTEQCEC) is the CysB motif element. Positions 2107-2114 (HKRIEIFL) match the Nuclear localization signal 2 motif.

It belongs to the DNA polymerase type-B family. In terms of assembly, heterotetramer. [4Fe-4S] cluster serves as cofactor. In terms of tissue distribution, mostly expressed at low levels in inflorescence (floral meristem and flowers until anthesis), and, to a lower extent, in seeds.

The protein resides in the nucleus. The enzyme catalyses DNA(n) + a 2'-deoxyribonucleoside 5'-triphosphate = DNA(n+1) + diphosphate. DNA polymerase II, which participates in chromosomal DNA replication. Involved in the determination of cell fate during plant embryogenesis. Contributes to the flowering time repression. This Arabidopsis thaliana (Mouse-ear cress) protein is DNA polymerase epsilon catalytic subunit B (POL2B).